The chain runs to 328 residues: Ferredoxin--NADP reductase 1 (328 aa).

Residues glutamate 37, lysine 45, tyrosine 49, valine 89, and threonine 310 each contribute to the FAD site.

Belongs to the ferredoxin--NADP reductase type 2 family. In terms of assembly, homodimer. It depends on FAD as a cofactor.

It carries out the reaction 2 reduced [2Fe-2S]-[ferredoxin] + NADP(+) + H(+) = 2 oxidized [2Fe-2S]-[ferredoxin] + NADPH. The chain is Ferredoxin--NADP reductase 1 from Latilactobacillus sakei subsp. sakei (strain 23K) (Lactobacillus sakei subsp. sakei).